A 222-amino-acid chain; its full sequence is MDSPFVLVNLKTYQEGMGSNAHRIAAAAETVAKESGAVIGIAPAFTELHPMSHHYAIPVYAQHIDAITPGAHTGHILPEAVRSAGARGTLINHSERRLTLADIGACVESARRLHLETVVCTNNDATSAAAAALRPDYVAIEPPELIGSGVSVSKADPGIIERSVNAVRAVNPDVNVLTGAGIQSGECVKIAVDLGTCGVLLASSVVKADDPEAVLRDLVSLL.

9–11 lines the substrate pocket; it reads NLK. Residue His-93 is the Electrophile of the active site. The active-site Proton acceptor is the Glu-141. Residues Ile-146, Gly-181, and 202-203 contribute to the substrate site; that span reads AS.

This sequence belongs to the triosephosphate isomerase family. Homotetramer; dimer of dimers.

The protein localises to the cytoplasm. The catalysed reaction is D-glyceraldehyde 3-phosphate = dihydroxyacetone phosphate. It functions in the pathway carbohydrate biosynthesis; gluconeogenesis. The protein operates within carbohydrate degradation; glycolysis; D-glyceraldehyde 3-phosphate from glycerone phosphate: step 1/1. Its function is as follows. Involved in the gluconeogenesis. Catalyzes stereospecifically the conversion of dihydroxyacetone phosphate (DHAP) to D-glyceraldehyde-3-phosphate (G3P). This is Triosephosphate isomerase from Methanoculleus marisnigri (strain ATCC 35101 / DSM 1498 / JR1).